A 279-amino-acid polypeptide reads, in one-letter code: Shikimate dehydrogenase (NADP(+)) (279 aa).

Residues 19-21 (SRS) and Thr-66 each bind shikimate. The active-site Proton acceptor is the Lys-70. The shikimate site is built by Asn-91 and Asp-106. NADP(+) is bound by residues 129–133 (GAGGA) and Phe-222. A shikimate-binding site is contributed by Tyr-224. Gly-243 is a binding site for NADP(+).

Belongs to the shikimate dehydrogenase family. In terms of assembly, homodimer.

It carries out the reaction shikimate + NADP(+) = 3-dehydroshikimate + NADPH + H(+). Its pathway is metabolic intermediate biosynthesis; chorismate biosynthesis; chorismate from D-erythrose 4-phosphate and phosphoenolpyruvate: step 4/7. Functionally, involved in the biosynthesis of the chorismate, which leads to the biosynthesis of aromatic amino acids. Catalyzes the reversible NADPH linked reduction of 3-dehydroshikimate (DHSA) to yield shikimate (SA). This chain is Shikimate dehydrogenase (NADP(+)), found in Anaeromyxobacter sp. (strain Fw109-5).